The primary structure comprises 318 residues: C1GALT1-specific chaperone 1 (318 aa).

Residues 1-6 (MLSESS) are Cytoplasmic-facing. Residues 7–26 (SFLKGVMLGSIFCALITMLG) form a helical; Signal-anchor for type II membrane protein membrane-spanning segment. At 27–318 (HIRIGHGNRM…FLPPNGSDND (292 aa)) the chain is on the lumenal side.

This sequence belongs to the glycosyltransferase 31 family. Beta3-Gal-T subfamily. As to quaternary structure, associates with core 1 beta-3-galactosyltransferase (C1GALT1), probably not with the soluble active form. In terms of tissue distribution, ubiquitously expressed. Abundantly expressed in salivary gland, stomach, small intestine, kidney, and testis and at intermediate levels in whole brain, cerebellum, spinal cord, thymus, spleen, trachea, lung, pancreas, ovary, and uterus.

The protein localises to the membrane. Its function is as follows. Probable chaperone required for the generation of 1 O-glycan Gal-beta1-3GalNAc-alpha1-Ser/Thr (T antigen), which is a precursor for many extended O-glycans in glycoproteins. Probably acts as a specific molecular chaperone assisting the folding/stability of core 1 beta-3-galactosyltransferase (C1GALT1). The chain is C1GALT1-specific chaperone 1 (C1GALT1C1) from Homo sapiens (Human).